The primary structure comprises 60 residues: Mastoparan-VT3 (60 aa).

An N-terminal signal peptide occupies residues 1–27; that stretch reads MKNTILILFTAFIALLGFFGMSAEALA. AXPX repeat units follow at residues 27 to 30, 31 to 34, 35 to 38, and 41 to 44; these read ADPK, ADPL, AGPN, and ADPE. Residues 28-45 constitute a propeptide that is removed on maturation; it reads DPKADPLAGPNPDADPEA. Leucine 59 is modified (leucine amide).

Belongs to the MCD family. Mastoparan subfamily. In terms of tissue distribution, expressed by the venom gland.

It is found in the secreted. Its function is as follows. The synthetic peptide shows antimicrobial activities against Gram-negative bacteria (but not against all strains tested), Gram-positive bacteria (all strains tested) and the fungi C.albicans and C.parapsilosis. Exhibits moderate hemolytic activity (25% at 100 ug/ml) against washed human erythrocytes. This is Mastoparan-VT3 from Vespa tropica (Greater banded hornet).